Consider the following 417-residue polypeptide: MATKNNPSPKPMGTAQGDPGEAGTLPAPEAGIRDTGSTQLKAKPKKIRKIKALVIDLGSQYCKCGYAGEPRPTYFISSTVGKRSAEMAADAGDTFKETYVGHELLNMEASLKLVNPLKHGVVVDWDCIQNIWEYIFHTAMKILPEEHAVLVSDPPLSPTSNREKYAELMFETFGIPAMHVTSQALLSIYSYGKTSGLVVESGHGVSHVVPISEGDLLPGLPSRVDYAGCDLTNYLMQLLNEAGHKFSDDHLHIIEHIKKKCCYAALLPEEEMSLGLDELHVDYELPDGKVITIGQERFRCSEMLFKPSLVGSTQPGLPELTATCLDRCQGTGFKEEMAANVLLCGGCTMLDGFPERFQRELSLLCPGDSPTVAAAPERKTSVWTGGSILASLQAFQQLWVSKEEFEERGCAAIYSKC.

Residues 1 to 39 (MATKNNPSPKPMGTAQGDPGEAGTLPAPEAGIRDTGSTQ) form a disordered region. Ser-8 is modified (phosphoserine).

The protein belongs to the actin family.

The protein localises to the cytoplasm. The protein resides in the cytoskeleton. The chain is Actin-like protein 7B (Actl7b) from Rattus norvegicus (Rat).